The following is a 574-amino-acid chain: Septation ring formation regulator EzrA (574 aa).

The Extracellular segment spans residues 1–7 (MSSGIIL). A helical membrane pass occupies residues 8–26 (LIVAIVLLVIIAYLVGVII). The Cytoplasmic portion of the chain corresponds to 27–574 (RKRNDSLITS…YEKTREHIRF (548 aa)). 3 coiled-coil regions span residues 102 to 141 (NFIRAKHEINSVESQLNLVEEDIASIREALNILKEQEEKN), 274 to 350 (ELVT…ETES), and 459 to 520 (QLEA…SFEA).

This sequence belongs to the EzrA family.

It is found in the cell membrane. Its function is as follows. Negative regulator of FtsZ ring formation; modulates the frequency and position of FtsZ ring formation. Inhibits FtsZ ring formation at polar sites. Interacts either with FtsZ or with one of its binding partners to promote depolymerization. In Streptococcus pyogenes serotype M3 (strain SSI-1), this protein is Septation ring formation regulator EzrA.